We begin with the raw amino-acid sequence, 247 residues long: Probable cyclic nucleotide phosphodiesterase XBJ1_0953 (247 aa).

Fe cation-binding residues include aspartate 8, histidine 10, aspartate 52, asparagine 82, histidine 154, histidine 192, and histidine 194. AMP contacts are provided by residues histidine 10, aspartate 52, and 82-83 (NH). Histidine 194 is a binding site for AMP.

It belongs to the cyclic nucleotide phosphodiesterase class-III family. Fe(2+) is required as a cofactor.

The chain is Probable cyclic nucleotide phosphodiesterase XBJ1_0953 from Xenorhabdus bovienii (strain SS-2004) (Xenorhabdus nematophila subsp. bovienii).